We begin with the raw amino-acid sequence, 420 residues long: Zinc finger protein 362 (420 aa).

3 disordered regions span residues 1 to 28 (MSRS…WPPP), 54 to 80 (RPPH…ESSQ), and 115 to 155 (VTGL…SQSR). Low complexity predominate over residues 121–154 (STRTPSVSTSESSAGAGTGTGTSTPSTPTTTSQS). Thr162 is modified (phosphothreonine). Positions 178–202 (TIQGHGLLGPPKSERGRKKIKAENP) are disordered. Lys198 participates in a covalent cross-link: Glycyl lysine isopeptide (Lys-Gly) (interchain with G-Cter in SUMO2). 6 consecutive C2H2-type zinc fingers follow at residues 227 to 249 (YRCK…SKSH), 255 to 277 (HKCP…LRIH), 283 to 305 (YHCS…TRIH), 311 to 335 (YKCP…QRQH), 341 to 363 (YKCP…LSAH), and 371 to 393 (YCCS…MSKH). Residue Ser404 is modified to Phosphoserine.

It belongs to the krueppel C2H2-type zinc-finger protein family.

Its subcellular location is the nucleus. Its function is as follows. May be involved in transcriptional regulation. In Homo sapiens (Human), this protein is Zinc finger protein 362 (ZNF362).